An 882-amino-acid polypeptide reads, in one-letter code: Alanine--tRNA ligase (882 aa).

The Zn(2+) site is built by His-570, His-574, Cys-672, and His-676.

Belongs to the class-II aminoacyl-tRNA synthetase family. The cofactor is Zn(2+).

The protein localises to the cytoplasm. The enzyme catalyses tRNA(Ala) + L-alanine + ATP = L-alanyl-tRNA(Ala) + AMP + diphosphate. In terms of biological role, catalyzes the attachment of alanine to tRNA(Ala) in a two-step reaction: alanine is first activated by ATP to form Ala-AMP and then transferred to the acceptor end of tRNA(Ala). Also edits incorrectly charged Ser-tRNA(Ala) and Gly-tRNA(Ala) via its editing domain. In Xanthomonas campestris pv. campestris (strain ATCC 33913 / DSM 3586 / NCPPB 528 / LMG 568 / P 25), this protein is Alanine--tRNA ligase.